The primary structure comprises 236 residues: Ribosome-inactivating protein saporin-3 (236 aa).

E148 is a catalytic residue.

It belongs to the ribosome-inactivating protein family. Type 1 RIP subfamily.

It catalyses the reaction Endohydrolysis of the N-glycosidic bond at one specific adenosine on the 28S rRNA.. Ribosome-inactivating protein of type 1, inhibits protein synthesis in animal cells. Useful as immunotoxin for pharmacological applications. The polypeptide is Ribosome-inactivating protein saporin-3 (SAP3) (Saponaria officinalis (Common soapwort)).